The sequence spans 152 residues: Deoxyuridine 5'-triphosphate nucleotidohydrolase (152 aa).

Substrate-binding positions include 71-73, asparagine 84, 88-90, and methionine 98; these read RSG and LID.

This sequence belongs to the dUTPase family. Mg(2+) is required as a cofactor.

The catalysed reaction is dUTP + H2O = dUMP + diphosphate + H(+). It functions in the pathway pyrimidine metabolism; dUMP biosynthesis; dUMP from dCTP (dUTP route): step 2/2. Its function is as follows. This enzyme is involved in nucleotide metabolism: it produces dUMP, the immediate precursor of thymidine nucleotides and it decreases the intracellular concentration of dUTP so that uracil cannot be incorporated into DNA. In Shewanella amazonensis (strain ATCC BAA-1098 / SB2B), this protein is Deoxyuridine 5'-triphosphate nucleotidohydrolase.